The chain runs to 117 residues: Large ribosomal subunit protein bL20 (117 aa).

Belongs to the bacterial ribosomal protein bL20 family.

Its function is as follows. Binds directly to 23S ribosomal RNA and is necessary for the in vitro assembly process of the 50S ribosomal subunit. It is not involved in the protein synthesizing functions of that subunit. This is Large ribosomal subunit protein bL20 from Symbiobacterium thermophilum (strain DSM 24528 / JCM 14929 / IAM 14863 / T).